Reading from the N-terminus, the 432-residue chain is Asparagine--tRNA ligase 2 (432 aa).

This sequence belongs to the class-II aminoacyl-tRNA synthetase family. As to quaternary structure, homodimer.

It is found in the cytoplasm. The catalysed reaction is tRNA(Asn) + L-asparagine + ATP = L-asparaginyl-tRNA(Asn) + AMP + diphosphate + H(+). The protein is Asparagine--tRNA ligase 2 (asnS2) of Lactiplantibacillus plantarum (strain ATCC BAA-793 / NCIMB 8826 / WCFS1) (Lactobacillus plantarum).